A 375-amino-acid polypeptide reads, in one-letter code: Queuine tRNA-ribosyltransferase (375 aa).

Residue D89 is the Proton acceptor of the active site. Substrate contacts are provided by residues 89–93 (DSGGF), D143, Q187, and G214. The RNA binding stretch occupies residues 245–251 (GVGKPED). D264 functions as the Nucleophile in the catalytic mechanism. The RNA binding; important for wobble base 34 recognition stretch occupies residues 269 to 273 (TRNAR). Residues C302, C304, C307, and H333 each contribute to the Zn(2+) site.

Belongs to the queuine tRNA-ribosyltransferase family. Homodimer. Within each dimer, one monomer is responsible for RNA recognition and catalysis, while the other monomer binds to the replacement base PreQ1. Requires Zn(2+) as cofactor.

It carries out the reaction 7-aminomethyl-7-carbaguanine + guanosine(34) in tRNA = 7-aminomethyl-7-carbaguanosine(34) in tRNA + guanine. Its pathway is tRNA modification; tRNA-queuosine biosynthesis. In terms of biological role, catalyzes the base-exchange of a guanine (G) residue with the queuine precursor 7-aminomethyl-7-deazaguanine (PreQ1) at position 34 (anticodon wobble position) in tRNAs with GU(N) anticodons (tRNA-Asp, -Asn, -His and -Tyr). Catalysis occurs through a double-displacement mechanism. The nucleophile active site attacks the C1' of nucleotide 34 to detach the guanine base from the RNA, forming a covalent enzyme-RNA intermediate. The proton acceptor active site deprotonates the incoming PreQ1, allowing a nucleophilic attack on the C1' of the ribose to form the product. After dissociation, two additional enzymatic reactions on the tRNA convert PreQ1 to queuine (Q), resulting in the hypermodified nucleoside queuosine (7-(((4,5-cis-dihydroxy-2-cyclopenten-1-yl)amino)methyl)-7-deazaguanosine). This Klebsiella pneumoniae subsp. pneumoniae (strain ATCC 700721 / MGH 78578) protein is Queuine tRNA-ribosyltransferase.